A 414-amino-acid chain; its full sequence is 3-oxoacyl-[acyl-carrier-protein] synthase 2 (414 aa).

The 408-residue stretch at 4-411 (NIRVVITGMG…GHNAVLVFKK (408 aa)) folds into the Ketosynthase family 3 (KS3) domain. Active-site for beta-ketoacyl synthase activity residues include C165, H304, and H341.

This sequence belongs to the thiolase-like superfamily. Beta-ketoacyl-ACP synthases family.

It catalyses the reaction a fatty acyl-[ACP] + malonyl-[ACP] + H(+) = a 3-oxoacyl-[ACP] + holo-[ACP] + CO2. It carries out the reaction (9Z)-hexadecenoyl-[ACP] + malonyl-[ACP] + H(+) = 3-oxo-(11Z)-octadecenoyl-[ACP] + holo-[ACP] + CO2. It functions in the pathway lipid metabolism; fatty acid biosynthesis. Functionally, involved in the type II fatty acid elongation cycle. Catalyzes the elongation of a wide range of acyl-ACP by the addition of two carbons from malonyl-ACP to an acyl acceptor. Can efficiently catalyze the conversion of palmitoleoyl-ACP (cis-hexadec-9-enoyl-ACP) to cis-vaccenoyl-ACP (cis-octadec-11-enoyl-ACP), an essential step in the thermal regulation of fatty acid composition. The polypeptide is 3-oxoacyl-[acyl-carrier-protein] synthase 2 (fabF) (Staphylococcus aureus (strain MRSA252)).